Reading from the N-terminus, the 183-residue chain is Oleosin-B2 (183 aa).

The interval 1-23 (QASIFSRFFRMFSFIFPFVNVIK) is polar. 3 consecutive transmembrane segments (helical) span residues 24-44 (LIIASVTSLVCLAFSCVALGG), 46-66 (AVALIVSTPLFIMFSPILVPA), and 72-92 (LLASGLMAGTTLGLTGIGLIM). Residues 24–95 (LIIASVTSLV…TGIGLIMGLV (72 aa)) form a hydrophobic region.

Belongs to the oleosin family. As to expression, the full-length protein is found in the tapetal lipid bodies of immature anthers, the proteolytically cleaved C-terminal product is found on the coats of pollen grains. Not present in seeds.

It localises to the lipid droplet. It is found in the membrane. Functionally, many of the major pollen coat proteins are derived from endoproteolytic cleavage of oleosin-like proteins. This Brassica napus (Rape) protein is Oleosin-B2 (OlnB2).